A 287-amino-acid chain; its full sequence is MAGAKEIRSKIASVQNTQKITKAMEMVAASKMRKSQDRMAASRPYAETMRKVIGHLAHGNLEYKHPYLEDRDVKRVGYLVVSTDRGLCGGLNINLFKKLLAEMKTWTDKSVQCDLAMIGSKGVSFFNSVGGNVVAQVTGMGDNPSLSELIGPVKVMLQAYDEGRLDKLYIVSNKFINTMSQVPTISQLLPLPASDDDDLKHKSWDYLYEPDPKALLDTLLRRYVESQVYQGVVENLASEQAARMVAMKAATDNGGSLIKELQLVYNKARQASITQELTEIVSGAAAV.

This sequence belongs to the ATPase gamma chain family. F-type ATPases have 2 components, CF(1) - the catalytic core - and CF(0) - the membrane proton channel. CF(1) has five subunits: alpha(3), beta(3), gamma(1), delta(1), epsilon(1). CF(0) has three main subunits: a, b and c.

It is found in the cell inner membrane. Produces ATP from ADP in the presence of a proton gradient across the membrane. The gamma chain is believed to be important in regulating ATPase activity and the flow of protons through the CF(0) complex. The chain is ATP synthase gamma chain from Shigella sonnei (strain Ss046).